A 171-amino-acid chain; its full sequence is Adenine phosphoribosyltransferase (171 aa).

This sequence belongs to the purine/pyrimidine phosphoribosyltransferase family. In terms of assembly, homodimer.

It is found in the cytoplasm. It carries out the reaction AMP + diphosphate = 5-phospho-alpha-D-ribose 1-diphosphate + adenine. It functions in the pathway purine metabolism; AMP biosynthesis via salvage pathway; AMP from adenine: step 1/1. Catalyzes a salvage reaction resulting in the formation of AMP, that is energically less costly than de novo synthesis. This is Adenine phosphoribosyltransferase from Halalkalibacterium halodurans (strain ATCC BAA-125 / DSM 18197 / FERM 7344 / JCM 9153 / C-125) (Bacillus halodurans).